We begin with the raw amino-acid sequence, 456 residues long: Glutamate--tRNA ligase 1 (456 aa).

The short motif at 9-19 (PSPTGQIHIGN) is the 'HIGH' region element. Residues 250–254 (GLSKR) carry the 'KMSKS' region motif. An ATP-binding site is contributed by Lys-253.

Belongs to the class-I aminoacyl-tRNA synthetase family. Glutamate--tRNA ligase type 1 subfamily. In terms of assembly, monomer.

It is found in the cytoplasm. The catalysed reaction is tRNA(Glu) + L-glutamate + ATP = L-glutamyl-tRNA(Glu) + AMP + diphosphate. Catalyzes the attachment of glutamate to tRNA(Glu) in a two-step reaction: glutamate is first activated by ATP to form Glu-AMP and then transferred to the acceptor end of tRNA(Glu). The protein is Glutamate--tRNA ligase 1 of Chelativorans sp. (strain BNC1).